The sequence spans 441 residues: Ribosomal protein uS12 methylthiotransferase RimO (441 aa).

Positions proline 8–proline 118 constitute an MTTase N-terminal domain. 6 residues coordinate [4Fe-4S] cluster: cysteine 17, cysteine 53, cysteine 82, cysteine 150, cysteine 154, and cysteine 157. The Radical SAM core domain maps to leucine 136–glutamate 373. The TRAM domain maps to glutamine 376–valine 441.

Belongs to the methylthiotransferase family. RimO subfamily. It depends on [4Fe-4S] cluster as a cofactor.

The protein resides in the cytoplasm. The enzyme catalyses L-aspartate(89)-[ribosomal protein uS12]-hydrogen + (sulfur carrier)-SH + AH2 + 2 S-adenosyl-L-methionine = 3-methylsulfanyl-L-aspartate(89)-[ribosomal protein uS12]-hydrogen + (sulfur carrier)-H + 5'-deoxyadenosine + L-methionine + A + S-adenosyl-L-homocysteine + 2 H(+). Its function is as follows. Catalyzes the methylthiolation of an aspartic acid residue of ribosomal protein uS12. The polypeptide is Ribosomal protein uS12 methylthiotransferase RimO (Salmonella agona (strain SL483)).